Reading from the N-terminus, the 200-residue chain is ATP-dependent Clp protease proteolytic subunit 2 (200 aa).

S100 serves as the catalytic Nucleophile.

The protein belongs to the peptidase S14 family. Fourteen ClpP subunits assemble into 2 heptameric rings which stack back to back to give a disk-like structure with a central cavity, resembling the structure of eukaryotic proteasomes.

Its subcellular location is the cytoplasm. It catalyses the reaction Hydrolysis of proteins to small peptides in the presence of ATP and magnesium. alpha-casein is the usual test substrate. In the absence of ATP, only oligopeptides shorter than five residues are hydrolyzed (such as succinyl-Leu-Tyr-|-NHMec, and Leu-Tyr-Leu-|-Tyr-Trp, in which cleavage of the -Tyr-|-Leu- and -Tyr-|-Trp bonds also occurs).. Functionally, cleaves peptides in various proteins in a process that requires ATP hydrolysis. Has a chymotrypsin-like activity. Plays a major role in the degradation of misfolded proteins. The protein is ATP-dependent Clp protease proteolytic subunit 2 of Streptomyces avermitilis (strain ATCC 31267 / DSM 46492 / JCM 5070 / NBRC 14893 / NCIMB 12804 / NRRL 8165 / MA-4680).